We begin with the raw amino-acid sequence, 172 residues long: 3-hydroxydecanoyl-[acyl-carrier-protein] dehydratase (172 aa).

His-71 is an active-site residue.

Belongs to the thioester dehydratase family. FabA subfamily. In terms of assembly, homodimer.

It is found in the cytoplasm. The enzyme catalyses a (3R)-hydroxyacyl-[ACP] = a (2E)-enoyl-[ACP] + H2O. The catalysed reaction is (3R)-hydroxydecanoyl-[ACP] = (2E)-decenoyl-[ACP] + H2O. It catalyses the reaction (2E)-decenoyl-[ACP] = (3Z)-decenoyl-[ACP]. Its pathway is lipid metabolism; fatty acid biosynthesis. In terms of biological role, necessary for the introduction of cis unsaturation into fatty acids. Catalyzes the dehydration of (3R)-3-hydroxydecanoyl-ACP to E-(2)-decenoyl-ACP and then its isomerization to Z-(3)-decenoyl-ACP. Can catalyze the dehydratase reaction for beta-hydroxyacyl-ACPs with saturated chain lengths up to 16:0, being most active on intermediate chain length. In Yersinia enterocolitica serotype O:8 / biotype 1B (strain NCTC 13174 / 8081), this protein is 3-hydroxydecanoyl-[acyl-carrier-protein] dehydratase.